We begin with the raw amino-acid sequence, 577 residues long: Proline--tRNA ligase (577 aa).

This sequence belongs to the class-II aminoacyl-tRNA synthetase family. ProS type 1 subfamily. As to quaternary structure, homodimer.

It localises to the cytoplasm. The enzyme catalyses tRNA(Pro) + L-proline + ATP = L-prolyl-tRNA(Pro) + AMP + diphosphate. Functionally, catalyzes the attachment of proline to tRNA(Pro) in a two-step reaction: proline is first activated by ATP to form Pro-AMP and then transferred to the acceptor end of tRNA(Pro). As ProRS can inadvertently accommodate and process non-cognate amino acids such as alanine and cysteine, to avoid such errors it has two additional distinct editing activities against alanine. One activity is designated as 'pretransfer' editing and involves the tRNA(Pro)-independent hydrolysis of activated Ala-AMP. The other activity is designated 'posttransfer' editing and involves deacylation of mischarged Ala-tRNA(Pro). The misacylated Cys-tRNA(Pro) is not edited by ProRS. The sequence is that of Proline--tRNA ligase from Thermotoga sp. (strain RQ2).